Reading from the N-terminus, the 98-residue chain is Ubiquitin-related modifier 1 (98 aa).

G98 carries the 1-thioglycine modification. A Glycyl lysine isopeptide (Gly-Lys) (interchain with K-? in acceptor proteins) cross-link involves residue G98.

Belongs to the URM1 family. In terms of processing, C-terminal thiocarboxylation occurs in 2 steps, it is first acyl-adenylated (-COAMP) via the hesA/moeB/thiF part of UBA4, then thiocarboxylated (-COSH) via the rhodanese domain of UBA4.

The protein resides in the cytoplasm. It participates in tRNA modification; 5-methoxycarbonylmethyl-2-thiouridine-tRNA biosynthesis. Acts as a sulfur carrier required for 2-thiolation of mcm(5)S(2)U at tRNA wobble positions of cytosolic tRNA(Lys), tRNA(Glu) and tRNA(Gln). Serves as sulfur donor in tRNA 2-thiolation reaction by being thiocarboxylated (-COSH) at its C-terminus by the MOCS3 homolog UBA4. The sulfur is then transferred to tRNA to form 2-thiolation of mcm(5)S(2)U. Prior mcm(5) tRNA modification by the elongator complex is required for 2-thiolation. Also acts as a ubiquitin-like protein (UBL) that is covalently conjugated via an isopeptide bond to lysine residues of target proteins such as AHP1. The thiocarboxylated form serves as substrate for conjugation and oxidative stress specifically induces the formation of UBL-protein conjugates. The sequence is that of Ubiquitin-related modifier 1 from Candida glabrata (strain ATCC 2001 / BCRC 20586 / JCM 3761 / NBRC 0622 / NRRL Y-65 / CBS 138) (Yeast).